The sequence spans 233 residues: Small ribosomal subunit protein uS2 (233 aa).

Belongs to the universal ribosomal protein uS2 family.

The sequence is that of Small ribosomal subunit protein uS2 from Bacillus cereus (strain G9842).